The following is a 535-amino-acid chain: Peptide chain release factor 3 (535 aa).

The region spanning 8 to 278 (ARRRTFAIIS…VDQAPAPGPR (271 aa)) is the tr-type G domain. GTP contacts are provided by residues 17–24 (SHPDAGKT), 85–89 (DTPGH), and 139–142 (NKLD).

Belongs to the TRAFAC class translation factor GTPase superfamily. Classic translation factor GTPase family. PrfC subfamily.

The protein localises to the cytoplasm. Increases the formation of ribosomal termination complexes and stimulates activities of RF-1 and RF-2. It binds guanine nucleotides and has strong preference for UGA stop codons. It may interact directly with the ribosome. The stimulation of RF-1 and RF-2 is significantly reduced by GTP and GDP, but not by GMP. The chain is Peptide chain release factor 3 from Bordetella bronchiseptica (strain ATCC BAA-588 / NCTC 13252 / RB50) (Alcaligenes bronchisepticus).